Reading from the N-terminus, the 357-residue chain is Protein-glutamate methylesterase/protein-glutamine glutaminase 5 (357 aa).

The Response regulatory domain occupies 10–127 (RVLVVDDSSF…IDAQKAFKEE (118 aa)). Position 61 is a 4-aspartylphosphate (Asp-61). The 197-residue stretch at 161–357 (PRPAGQRYQY…IGTEITKIAG (197 aa)) folds into the CheB-type methylesterase domain. Active-site residues include Ser-176, His-203, and Asp-301.

This sequence belongs to the CheB family. Post-translationally, phosphorylated by CheA. Phosphorylation of the N-terminal regulatory domain activates the methylesterase activity.

The protein localises to the cytoplasm. It carries out the reaction [protein]-L-glutamate 5-O-methyl ester + H2O = L-glutamyl-[protein] + methanol + H(+). The enzyme catalyses L-glutaminyl-[protein] + H2O = L-glutamyl-[protein] + NH4(+). Functionally, involved in chemotaxis. Part of a chemotaxis signal transduction system that modulates chemotaxis in response to various stimuli. Catalyzes the demethylation of specific methylglutamate residues introduced into the chemoreceptors (methyl-accepting chemotaxis proteins or MCP) by CheR. Also mediates the irreversible deamidation of specific glutamine residues to glutamic acid. In Geobacter metallireducens (strain ATCC 53774 / DSM 7210 / GS-15), this protein is Protein-glutamate methylesterase/protein-glutamine glutaminase 5.